Consider the following 323-residue polypeptide: tRNA U34 carboxymethyltransferase (323 aa).

Residues K91, W105, K110, G130, D152–T154, I181–E182, M196, Y200, and R315 each bind carboxy-S-adenosyl-L-methionine.

This sequence belongs to the class I-like SAM-binding methyltransferase superfamily. CmoB family. Homotetramer.

It carries out the reaction carboxy-S-adenosyl-L-methionine + 5-hydroxyuridine(34) in tRNA = 5-carboxymethoxyuridine(34) in tRNA + S-adenosyl-L-homocysteine + H(+). Functionally, catalyzes carboxymethyl transfer from carboxy-S-adenosyl-L-methionine (Cx-SAM) to 5-hydroxyuridine (ho5U) to form 5-carboxymethoxyuridine (cmo5U) at position 34 in tRNAs. The sequence is that of tRNA U34 carboxymethyltransferase from Shigella flexneri serotype 5b (strain 8401).